A 570-amino-acid polypeptide reads, in one-letter code: Ferroportin (570 aa).

The Cytoplasmic portion of the chain corresponds to Met-1–Ser-23. The helical transmembrane segment at Ala-24–Leu-53 threads the bilayer. Residues Asp-39 and His-43 each contribute to the Fe cation site. The Extracellular portion of the chain corresponds to Tyr-54–Ser-57. The chain crosses the membrane as a helical span at residues Leu-58 to Asp-84. The Cytoplasmic segment spans residues Lys-85 to Ala-87. The chain crosses the membrane as a helical span at residues Arg-88–Asn-118. Topologically, residues Glu-119–Gly-126 are extracellular. Residues Trp-127 to Val-162 form a helical membrane-spanning segment. Topologically, residues Ala-163–Gly-164 are cytoplasmic. The helical transmembrane segment at Glu-165–Ile-195 threads the bilayer. Residues Met-196–Val-202 lie on the Extracellular side of the membrane. A helical membrane pass occupies residues Ile-203 to Lys-229. At Thr-230 to Pro-306 the chain is on the cytoplasmic side. A helical transmembrane segment spans residues Val-307–Tyr-333. Cys-326 contacts Fe cation. Over Thr-334 to Ser-338 the chain is Extracellular. The chain crosses the membrane as a helical span at residues Gly-339–Lys-366. Topologically, residues Cys-367–Gly-368 are cytoplasmic. The helical transmembrane segment at Leu-369–Val-391 threads the bilayer. The Extracellular portion of the chain corresponds to Phe-392–Val-452. Residue Asn-437 is glycosylated (N-linked (GlcNAc...) asparagine). Residues Ser-453 to Asn-482 traverse the membrane as a helical segment. Residues Val-483 to Glu-487 lie on the Cytoplasmic side of the membrane. Residues Arg-488 to Leu-512 form a helical membrane-spanning segment. His-506 provides a ligand contact to Fe cation. The Extracellular segment spans residues Ala-513 to Asn-515. Residues Pro-516 to Ala-541 traverse the membrane as a helical segment. At Gln-542–Val-570 the chain is on the cytoplasmic side.

Belongs to the ferroportin (FP) (TC 2.A.100) family. SLC40A subfamily. In terms of assembly, identified in a complex with STOM. Interacts with HAMP; affinity of the peptide hormone HAMP for SLC40A1 increases by 80-fold in the presence of iron and the interaction promotes SLC40A1 ubiquitination and degradation. Part of a complex composed of SLC40A1/ferroportin, TF/transferrin and HEPH/hephaestin that transfers iron from cells to transferrin. Polyubiquitinated by RNF217; leading to proteasomal degradation. Under conditions of high systemic iron levels, both the hormone peptide hepcidin/HAMP and holo(iron bound)-transferrin/TF induce the ubiquitination, internalization and proteasomal degradation of SLC40A1 to control iron release from cells. As to expression, high expression in spleen, liver, kidney, heart and duodenum.

The protein localises to the cell membrane. It localises to the basolateral cell membrane. The catalysed reaction is Fe(2+)(in) = Fe(2+)(out). Its function is as follows. Transports Fe(2+) from the inside of a cell to the outside of the cell, playing a key role for maintaining systemic iron homeostasis. Transports iron from intestinal, splenic, hepatic cells, macrophages and erythrocytes into the blood to provide iron to other tissues. Controls therefore dietary iron uptake, iron recycling by macrophages and erythrocytes, and release of iron stores in hepatocytes. When iron is in excess in serum, circulating HAMP/hepcidin levels increase resulting in a degradation of SLC40A1, thus limiting the iron efflux to plasma. The chain is Ferroportin from Mus musculus (Mouse).